Consider the following 258-residue polypeptide: Type III pantothenate kinase (258 aa).

12–19 lines the ATP pocket; that stretch reads DIGNTSIA. Substrate is bound by residues tyrosine 94 and 109–112; that span reads GSDV. The active-site Proton acceptor is aspartate 111. K(+) is bound at residue aspartate 132. Position 135 (threonine 135) interacts with ATP. Residue threonine 187 participates in substrate binding.

Belongs to the type III pantothenate kinase family. In terms of assembly, homodimer. NH4(+) is required as a cofactor. K(+) serves as cofactor.

It localises to the cytoplasm. The enzyme catalyses (R)-pantothenate + ATP = (R)-4'-phosphopantothenate + ADP + H(+). Its pathway is cofactor biosynthesis; coenzyme A biosynthesis; CoA from (R)-pantothenate: step 1/5. In terms of biological role, catalyzes the phosphorylation of pantothenate (Pan), the first step in CoA biosynthesis. This chain is Type III pantothenate kinase, found in Borreliella afzelii (strain PKo) (Borrelia afzelii).